The chain runs to 406 residues: COP9 signalosome complex subunit 4 (406 aa).

Position 2 is an N-acetylalanine (A2). N6-acetyllysine is present on K25. Positions 197–366 (YRRKFIEAAQ…GIVHFETREA (170 aa)) constitute a PCI domain.

Belongs to the CSN4 family. Component of the CSN complex, composed of COPS1/GPS1, COPS2, COPS3, COPS4, COPS5, COPS6, COPS7 (COPS7A or COPS7B), COPS8 and COPS9. In the complex, it probably interacts directly with COPS1, COPS2, COPS3, COPS5, COPS6, COPS7 (COPS7A or COPS7B) and COPS8. Interacts with TOR1A; the interaction is direct and associates TOR1A and SNAPIN with the CSN complex. Interacts with STON2; controls STON2 neddylation levels. Interacts with ERCC6.

The protein localises to the cytoplasm. Its subcellular location is the nucleus. It is found in the cytoplasmic vesicle. The protein resides in the secretory vesicle. It localises to the synaptic vesicle. Its function is as follows. Component of the COP9 signalosome complex (CSN), a complex involved in various cellular and developmental processes. The CSN complex is an essential regulator of the ubiquitin (Ubl) conjugation pathway by mediating the deneddylation of the cullin subunits of SCF-type E3 ligase complexes, leading to decrease the Ubl ligase activity of SCF-type complexes such as SCF, CSA or DDB2. Also involved in the deneddylation of non-cullin subunits such as STON2. The complex is also involved in phosphorylation of p53/TP53, c-jun/JUN, IkappaBalpha/NFKBIA, ITPK1, IRF8/ICSBP and SNAPIN, possibly via its association with CK2 and PKD kinases. CSN-dependent phosphorylation of TP53 and JUN promotes and protects degradation by the Ubl system, respectively. This Rattus norvegicus (Rat) protein is COP9 signalosome complex subunit 4 (Cops4).